Consider the following 243-residue polypeptide: MALLPVLFLVTVLLPSLPAEGKDPAFTALLTTQLQVQREIVNKHNELRKAVSPPASNMLKMEWSREVTTNAQRWANKCTLQHSDPEDRKTSTRCGENLYMSSDPTSWSSAIQSWYDEILDFVYGVGPKSPNAVVGHYTQLVWYSTYQVGCGIAYCPNQDSLKYYYVCQYCPAGNNMNRKNTPYQQGTPCAGCPDDCDKGLCTNSCQYQDLLSNCDSLKNTAGCEHELLKEKCKATCLCENKIY.

An N-terminal signal peptide occupies residues 1–21 (MALLPVLFLVTVLLPSLPAEG). Residues 41–169 (VNKHNELRKA…SLKYYYVCQY (129 aa)) enclose the SCP domain. Intrachain disulfides connect cysteine 189-cysteine 196, cysteine 192-cysteine 201, cysteine 205-cysteine 238, cysteine 214-cysteine 232, and cysteine 223-cysteine 236. Positions 205–238 (CQYQDLLSNCDSLKNTAGCEHELLKEKCKATCLC) constitute a ShKT domain.

It belongs to the CRISP family. In terms of assembly, interacts with NSUN4 isoform 3. Testis and epididymis.

The protein localises to the secreted. In terms of biological role, may regulate some ion channels' activity and thereby regulate calcium fluxes during sperm capacitation. This is Cysteine-rich secretory protein 2 (CRISP2) from Homo sapiens (Human).